The chain runs to 572 residues: Probable terpene synthase 13 (572 aa).

Residues Asp-326, Asp-330, and Glu-478 each coordinate Mg(2+). A DDXXD motif motif is present at residues 326-330 (DDIFD).

Belongs to the terpene synthase family. Mg(2+) is required as a cofactor.

Probable sesquiterpene synthase. This chain is Probable terpene synthase 13 (TPS13), found in Ricinus communis (Castor bean).